A 306-amino-acid polypeptide reads, in one-letter code: Pantothenate kinase (306 aa).

Position 91–98 (91–98 (GSVAVGKS)) interacts with ATP.

It belongs to the prokaryotic pantothenate kinase family.

The protein localises to the cytoplasm. The catalysed reaction is (R)-pantothenate + ATP = (R)-4'-phosphopantothenate + ADP + H(+). It functions in the pathway cofactor biosynthesis; coenzyme A biosynthesis; CoA from (R)-pantothenate: step 1/5. The sequence is that of Pantothenate kinase from Streptococcus equi subsp. equi (strain 4047).